Reading from the N-terminus, the 102-residue chain is Pole-localizer protein TmaR (102 aa).

A coiled-coil region spans residues 7-34 (IINQARRKNKLKRELQDNQKKIRDNQKR).

The protein belongs to the pole-localizer TmaR family.

It localises to the cytoplasm. Its function is as follows. Pole-localizer protein involved in the regulation of several cellular processes. The chain is Pole-localizer protein TmaR from Aliivibrio salmonicida (strain LFI1238) (Vibrio salmonicida (strain LFI1238)).